The primary structure comprises 100 residues: Small ribosomal subunit protein uS14 (100 aa).

Belongs to the universal ribosomal protein uS14 family. Part of the 30S ribosomal subunit. Contacts proteins S3 and S10.

In terms of biological role, binds 16S rRNA, required for the assembly of 30S particles and may also be responsible for determining the conformation of the 16S rRNA at the A site. This chain is Small ribosomal subunit protein uS14, found in Microcystis aeruginosa (strain NIES-843 / IAM M-2473).